Reading from the N-terminus, the 177-residue chain is Large ribosomal subunit protein uL6 (177 aa).

The protein belongs to the universal ribosomal protein uL6 family. Part of the 50S ribosomal subunit.

Its function is as follows. This protein binds to the 23S rRNA, and is important in its secondary structure. It is located near the subunit interface in the base of the L7/L12 stalk, and near the tRNA binding site of the peptidyltransferase center. The polypeptide is Large ribosomal subunit protein uL6 (Rhizobium johnstonii (strain DSM 114642 / LMG 32736 / 3841) (Rhizobium leguminosarum bv. viciae)).